Consider the following 353-residue polypeptide: MSAGKGLLLVICLLFLPLKSAMALNCYFGTSGGAVEKSEAIQPFAVPGNAKPGDKIWESDDIKIPVYCDNNTNGNFESEHVYAWVNPYPGVQDRYYQLGVTYNGVDYDASLGKSRIDTNQCIDSKNIDIYTPEQIIAMGWQNKICSGDPANIHMSRTFLARMRLYVKIREMPPHDYQSTLSDYIVVQFDGAGSVNEDPTAQNLKYHITGLENIRVLDCSVNFSISPETQVIDFGKFNLLDIRRHTMSKTFSIKTTKSQNDQCTDGFKVSSSFYTEETLVEEDKALLIGNGLKLRLLDENASPYTFNKYAEYADFTSDMLVYEKTYTAELSSIPGTPIEAGPFDTVVLFKINYN.

The signal sequence occupies residues 1–23; that stretch reads MSAGKGLLLVICLLFLPLKSAMA.

To E.coli YqiI.

In terms of biological role, may be involved in a fimbrial system chaperoned by YbgP and exported by YbgQ. This is an uncharacterized protein from Escherichia coli (strain K12).